A 275-amino-acid polypeptide reads, in one-letter code: MSMDGLPPLRDVIERHGLFARKALGQNFLLDLNLTRRIARTAGGLDNATVLEVGPGPGGLTRALLMEGARRVVAIERDERCIAALEEIAAHYPGRLEIVAGDAMKADFAALAGNSGDVKIVANLPYNIGTELLIRWLTPQTWPPFYESMTLMFQREVAERIVAKPGSSHYGRLGVLAGWRTEARIAFDVPPQAFTPPPKVISSVVKIVPRADPLTVEVGRLARTTEAAFGQRRKMLRQSLRSVGGEALLEKAGIDGTRRAETLSVEEFVRLAREI.

N27, L29, G54, E76, D102, and N123 together coordinate S-adenosyl-L-methionine.

Belongs to the class I-like SAM-binding methyltransferase superfamily. rRNA adenine N(6)-methyltransferase family. RsmA subfamily.

It localises to the cytoplasm. It catalyses the reaction adenosine(1518)/adenosine(1519) in 16S rRNA + 4 S-adenosyl-L-methionine = N(6)-dimethyladenosine(1518)/N(6)-dimethyladenosine(1519) in 16S rRNA + 4 S-adenosyl-L-homocysteine + 4 H(+). Specifically dimethylates two adjacent adenosines (A1518 and A1519) in the loop of a conserved hairpin near the 3'-end of 16S rRNA in the 30S particle. May play a critical role in biogenesis of 30S subunits. In Chelativorans sp. (strain BNC1), this protein is Ribosomal RNA small subunit methyltransferase A.